The following is a 168-amino-acid chain: Transcription antitermination protein NusB (168 aa).

Belongs to the NusB family.

In terms of biological role, involved in transcription antitermination. Required for transcription of ribosomal RNA (rRNA) genes. Binds specifically to the boxA antiterminator sequence of the ribosomal RNA (rrn) operons. This Chlamydia trachomatis serovar D (strain ATCC VR-885 / DSM 19411 / UW-3/Cx) protein is Transcription antitermination protein NusB.